The sequence spans 425 residues: Adenosine 3'-phospho 5'-phosphosulfate transporter 1 (425 aa).

The next 9 membrane-spanning stretches (helical) occupy residues 27–47 (FLILLGYSTVATPAAILIYYV), 102–122 (VIILLLFFFSGIQVTLVAMGV), 147–167 (TQFLIFCNRIVALVLSLMILA), 232–252 (YSWFEYGCGCTIAFGASLFLL), 263–283 (ITYTSFSGMILMAGYLLFDAF), 303–323 (MMFGVNFFSAILCAVSLIEQG), 342–360 (VFLLSLSGAIGQIFIYSTI), 365–387 (PIVFAVIMTIRQMLSIVLSTIMY), and 391–411 (LTFLAAIGFMIVFAAIFVDIH).

It belongs to the nucleotide-sugar transporter family. SLC35B subfamily.

The protein localises to the golgi apparatus membrane. Mediates the transport of adenosine 3'-phospho 5'-phosphosulfate (PAPS), from cytosol into Golgi. PAPS is a universal sulfuryl donor for sulfation events that take place in the Golgi. The polypeptide is Adenosine 3'-phospho 5'-phosphosulfate transporter 1 (pst-1) (Caenorhabditis elegans).